The primary structure comprises 512 residues: ADP,ATP carrier protein 4 (512 aa).

11 helical membrane passes run 34 to 54 (ISKF…QNLI), 71 to 91 (ISFL…VIYV), 102 to 122 (IFYL…YVIF), 157 to 177 (FSLF…LLFW), 192 to 212 (FYPL…HFLE), 231 to 251 (FHTL…IVSI), 296 to 316 (LIAT…GPWK), 330 to 350 (AAFI…FVLL), 361 to 381 (FTSA…FFAV), 390 to 410 (LIIA…IGAI), and 476 to 496 (SISI…IWAT).

The protein belongs to the ADP/ATP translocase tlc family.

Its subcellular location is the cell membrane. Functionally, provides the rickettsial cell with host ATP in exchange for rickettsial ADP. This is an obligate exchange system. This energy acquiring activity is an important component of rickettsial parasitism. This Rickettsia prowazekii (strain Madrid E) protein is ADP,ATP carrier protein 4 (tlcD).